Reading from the N-terminus, the 273-residue chain is Outer surface protein A (273 aa).

The first 16 residues, 1–16 (MKKYLLGIGLILALIA), serve as a signal peptide directing secretion. The N-palmitoyl cysteine moiety is linked to residue cysteine 17. A lipid anchor (S-diacylglycerol cysteine) is attached at cysteine 17.

It belongs to the OspA lipoprotein family.

The protein resides in the cell outer membrane. Its subcellular location is the cell surface. This is Outer surface protein A from Borreliella burgdorferi (Lyme disease spirochete).